The chain runs to 569 residues: Urease subunit alpha (569 aa).

The Urease domain occupies Gly-131 to Leu-569. The Ni(2+) site is built by His-136, His-138, and Lys-219. Lys-219 bears the N6-carboxylysine mark. Position 221 (His-221) interacts with substrate. His-248 and His-274 together coordinate Ni(2+). Residue His-322 is the Proton donor of the active site. Asp-362 is a Ni(2+) binding site.

It belongs to the metallo-dependent hydrolases superfamily. Urease alpha subunit family. Heterotrimer of UreA (gamma), UreB (beta) and UreC (alpha) subunits. Three heterotrimers associate to form the active enzyme. Ni cation is required as a cofactor. Carboxylation allows a single lysine to coordinate two nickel ions.

Its subcellular location is the cytoplasm. It catalyses the reaction urea + 2 H2O + H(+) = hydrogencarbonate + 2 NH4(+). Its pathway is nitrogen metabolism; urea degradation; CO(2) and NH(3) from urea (urease route): step 1/1. The chain is Urease subunit alpha from Prochlorococcus marinus (strain AS9601).